Reading from the N-terminus, the 114-residue chain is rRNA-processing protein cgrA (114 aa).

The disordered stretch occupies residues 1-96 (MSASESAPSA…YDKMAEKMHR (96 aa)). Positions 40–101 (AKRLEARKHQ…EKMHRKRVER (62 aa)) form a coiled coil. The span at 41-93 (KRLEARKHQEAVKEHERELKEEKEAERQAHIQRIKDRRAAKEEKERYDKMAEK) shows a compositional bias: basic and acidic residues.

Belongs to the CGR1 family.

Its subcellular location is the nucleus. It is found in the nucleolus. Involved in nucleolar integrity and required for processing of the pre-rRNA for the 60S ribosome subunit. This chain is rRNA-processing protein cgrA (cgrA), found in Aspergillus terreus (strain NIH 2624 / FGSC A1156).